The primary structure comprises 180 residues: Pro-glucagon (180 aa).

Residues 1-20 form the signal peptide; it reads MKTIYFVAGLLIMLVQGSWQ. Residues 25 to 58 form a disordered region; that stretch reads DTEENPRSFPASQTEAHEDPDEMNEDKRHSQGTF. The residue at position 54 (Ser54) is a Phosphoserine. Residues 84-89 constitute a propeptide that is removed on maturation; sequence NRNNIA. Phosphoserine occurs at positions 105 and 108. Arg127 is subject to Arginine amide. Positions 131-145 are excised as a propeptide; it reads DFPEEVAIAEELGRR. Phosphoserine is present on residues Ser150 and Ser152.

It belongs to the glucagon family. Proglucagon is post-translationally processed in a tissue-specific manner in pancreatic A cells and intestinal L cells. In pancreatic A cells, the major bioactive hormone is glucagon cleaved by PCSK2/PC2. In the intestinal L cells PCSK1/PC1 liberates GLP-1, GLP-2, glicentin and oxyntomodulin. GLP-1 is further N-terminally truncated by post-translational processing in the intestinal L cells resulting in GLP-1(7-37) GLP-1-(7-36)amide. The C-terminal amidation is neither important for the metabolism of GLP-1 nor for its effects on the endocrine pancreas. As to expression, secreted in the A cells of the islets of Langerhans. In terms of tissue distribution, secreted in the A cells of the islets of Langerhans. Secreted from enteroendocrine L cells throughout the gastrointestinal tract. Also secreted in selected neurons in the brain. Secreted from enteroendocrine cells throughout the gastrointestinal tract. Also secreted in selected neurons in the brain. As to expression, secreted from enteroendocrine cells throughout the gastrointestinal tract.

It is found in the secreted. Functionally, plays a key role in glucose metabolism and homeostasis. Regulates blood glucose by increasing gluconeogenesis and decreasing glycolysis. A counterregulatory hormone of insulin, raises plasma glucose levels in response to insulin-induced hypoglycemia. Plays an important role in initiating and maintaining hyperglycemic conditions in diabetes. Its function is as follows. Potent stimulator of glucose-dependent insulin release. Also stimulates insulin release in response to IL6. Plays important roles on gastric motility and the suppression of plasma glucagon levels. May be involved in the suppression of satiety and stimulation of glucose disposal in peripheral tissues, independent of the actions of insulin. Has growth-promoting activities on intestinal epithelium. May also regulate the hypothalamic pituitary axis (HPA) via effects on LH, TSH, CRH, oxytocin, and vasopressin secretion. Increases islet mass through stimulation of islet neogenesis and pancreatic beta cell proliferation. Inhibits beta cell apoptosis. In terms of biological role, stimulates intestinal growth and up-regulates villus height in the small intestine, concomitant with increased crypt cell proliferation and decreased enterocyte apoptosis. The gastrointestinal tract, from the stomach to the colon is the principal target for GLP-2 action. Plays a key role in nutrient homeostasis, enhancing nutrient assimilation through enhanced gastrointestinal function, as well as increasing nutrient disposal. Stimulates intestinal glucose transport and decreases mucosal permeability. Significantly reduces food intake. Inhibits gastric emptying in humans. Suppression of gastric emptying may lead to increased gastric distension, which may contribute to satiety by causing a sensation of fullness. Functionally, may modulate gastric acid secretion and the gastro-pyloro-duodenal activity. May play an important role in intestinal mucosal growth in the early period of life. In Mus musculus (Mouse), this protein is Pro-glucagon (Gcg).